The chain runs to 413 residues: Tubby-like F-box protein 6 (413 aa).

The F-box domain maps to 67 to 122; it reads SIWVDLPPELLLDIIQRIESEQSLWPGRRDVVACASVCKSWREMTKEVVKVPELSG.

Belongs to the TUB family. In terms of tissue distribution, ubiquitous, with higher levels in flowers.

This is Tubby-like F-box protein 6 from Arabidopsis thaliana (Mouse-ear cress).